The primary structure comprises 423 residues: Phytoene synthase, chloroplastic (423 aa).

The N-terminal 136 residues, 1–136 (MVVAILRVVS…DAYDRCGEVC (136 aa)), are a transit peptide targeting the chloroplast.

The protein belongs to the phytoene/squalene synthase family. Monomer.

The protein resides in the plastid. It localises to the chloroplast. The enzyme catalyses 2 (2E,6E,10E)-geranylgeranyl diphosphate = 15-cis-phytoene + 2 diphosphate. Its pathway is carotenoid biosynthesis; phytoene biosynthesis; all-trans-phytoene from geranylgeranyl diphosphate: step 1/1. Functionally, catalyzes the reaction from prephytoene diphosphate to phytoene. The chain is Phytoene synthase, chloroplastic (PSY) from Narcissus pseudonarcissus (Daffodil).